A 430-amino-acid polypeptide reads, in one-letter code: Glutamate-1-semialdehyde 2,1-aminomutase (430 aa).

Lys267 is subject to N6-(pyridoxal phosphate)lysine.

It belongs to the class-III pyridoxal-phosphate-dependent aminotransferase family. HemL subfamily. As to quaternary structure, homodimer. The cofactor is pyridoxal 5'-phosphate.

Its subcellular location is the cytoplasm. The enzyme catalyses (S)-4-amino-5-oxopentanoate = 5-aminolevulinate. Its pathway is porphyrin-containing compound metabolism; protoporphyrin-IX biosynthesis; 5-aminolevulinate from L-glutamyl-tRNA(Glu): step 2/2. In Thermomicrobium roseum (strain ATCC 27502 / DSM 5159 / P-2), this protein is Glutamate-1-semialdehyde 2,1-aminomutase.